Reading from the N-terminus, the 709-residue chain is G1/S-specific cyclin-E (709 aa).

Disordered stretches follow at residues 1–30, 43–149, 162–205, 221–289, and 642–709; these read MGLN…NGEV, ISSS…NLSS, VDGQ…GSKQ, TVVT…PKHQ, and ALRA…RSNP. 3 stretches are compositionally biased toward polar residues: residues 7 to 29, 61 to 70, and 91 to 106; these read SVCS…SNGE, PSTSFSSASQ, and CDSQ…TSNG. 4 positions are modified to phosphoserine: S114, S115, S117, and S129. Residues 162–175 are compositionally biased toward polar residues; it reads VDGQSTQELLSIRS. A phosphoserine mark is found at S187, S192, S195, and S198. Over residues 187–199 the composition is skewed to pro residues; that stretch reads SPLPDSPDSPPSP. Over residues 228 to 258 the composition is skewed to acidic residues; the sequence is EDDDLLDDSCEDYSYDEDDEDDVEEEDDDVE. The segment covering 260-277 has biased composition (polar residues); sequence YSSTISPASSGCSQQQAV. T651 is modified (phosphothreonine). Low complexity predominate over residues 677–709; it reads SSTTTCCNTAASNKGGKSSSNNSVTSCSSRSNP.

The protein belongs to the cyclin family. Cyclin E subfamily. Interacts with a member of the CDK2/CDK protein kinases to form a serine/threonine kinase holoenzyme complex. The cyclin subunit imparts substrate specificity to the complex. Interacts (via C-terminus) with Z600 (via C-terminus). Isoform II is ubiquitous in early embryos and, prior to mitosis 14, is rapidly degraded in all cells except the pole (germ) cells. Expressed during G1 phase in proliferating peripheral nervous system cells. Constitutive expression in embryonic cycles lacking a G1 phase.

It localises to the nucleus. Its function is as follows. Essential for the control of the cell cycle at the G1/S (start) transition. Targeted by archipelago for degradation by the SFC ubiquitin ligase complex. This chain is G1/S-specific cyclin-E (CycE), found in Drosophila melanogaster (Fruit fly).